A 1201-amino-acid polypeptide reads, in one-letter code: Protein dduB (1201 aa).

The signal sequence occupies residues 1–22 (MKFIKYLLILFLILKINYFVES). Over 23 to 1180 (GVDCQKNTEY…QDPSDELSTS (1158 aa)) the chain is Extracellular. N-linked (GlcNAc...) asparagine glycosylation is found at N68, N122, N150, N185, N283, N348, N360, N437, N448, N518, N535, N554, N585, N631, N759, N815, N830, N844, N946, N1042, N1058, N1098, and N1108. A helical transmembrane segment spans residues 1181 to 1201 (SFIQLNILSLLLISIFTIFIL).

The protein resides in the membrane. This is Protein dduB (dduB) from Dictyostelium discoideum (Social amoeba).